The chain runs to 2288 residues: Protein Ycf2 (2288 aa).

Position 1629–1636 (1629–1636 (GSIGTGRS)) interacts with ATP.

Belongs to the Ycf2 family.

Its subcellular location is the plastid. The protein localises to the chloroplast stroma. Probable ATPase of unknown function. Its presence in a non-photosynthetic plant (Epifagus virginiana) and experiments in tobacco indicate that it has an essential function which is probably not related to photosynthesis. This Phaseolus vulgaris (Kidney bean) protein is Protein Ycf2.